A 430-amino-acid polypeptide reads, in one-letter code: Glutamate-1-semialdehyde 2,1-aminomutase (430 aa).

Lysine 267 bears the N6-(pyridoxal phosphate)lysine mark.

The protein belongs to the class-III pyridoxal-phosphate-dependent aminotransferase family. HemL subfamily. Homodimer. It depends on pyridoxal 5'-phosphate as a cofactor.

The protein resides in the cytoplasm. It catalyses the reaction (S)-4-amino-5-oxopentanoate = 5-aminolevulinate. Its pathway is porphyrin-containing compound metabolism; protoporphyrin-IX biosynthesis; 5-aminolevulinate from L-glutamyl-tRNA(Glu): step 2/2. This Desulfotalea psychrophila (strain LSv54 / DSM 12343) protein is Glutamate-1-semialdehyde 2,1-aminomutase.